Consider the following 245-residue polypeptide: NLP effector protein Pc118551 (245 aa).

The first 19 residues, 1–19, serve as a signal peptide directing secretion; that stretch reads MNLRAFLLSAVAALVAVQA. The Hepta-peptide GHRHDWE motif motif lies at 121–127; that stretch reads QRRHLWE. N-linked (GlcNAc...) asparagine glycosylation is present at Asn-140.

The protein belongs to the Necrosis inducing protein (NPP1) family.

Its subcellular location is the secreted. In terms of biological role, secreted effector that contributes strongly to virulence during infection by P.capsici. The protein is NLP effector protein Pc118551 of Phytophthora capsici.